An 89-amino-acid chain; its full sequence is Small ribosomal subunit protein uS15 (89 aa).

It belongs to the universal ribosomal protein uS15 family. Part of the 30S ribosomal subunit. Forms a bridge to the 50S subunit in the 70S ribosome, contacting the 23S rRNA.

Its function is as follows. One of the primary rRNA binding proteins, it binds directly to 16S rRNA where it helps nucleate assembly of the platform of the 30S subunit by binding and bridging several RNA helices of the 16S rRNA. Functionally, forms an intersubunit bridge (bridge B4) with the 23S rRNA of the 50S subunit in the ribosome. This chain is Small ribosomal subunit protein uS15, found in Dinoroseobacter shibae (strain DSM 16493 / NCIMB 14021 / DFL 12).